A 178-amino-acid polypeptide reads, in one-letter code: Large ribosomal subunit protein uL6 (178 aa).

The protein belongs to the universal ribosomal protein uL6 family. As to quaternary structure, part of the 50S ribosomal subunit.

In terms of biological role, this protein binds to the 23S rRNA, and is important in its secondary structure. It is located near the subunit interface in the base of the L7/L12 stalk, and near the tRNA binding site of the peptidyltransferase center. This is Large ribosomal subunit protein uL6 from Nitrosococcus oceani (strain ATCC 19707 / BCRC 17464 / JCM 30415 / NCIMB 11848 / C-107).